The sequence spans 317 residues: Melanocyte-stimulating hormone receptor (317 aa).

Residues 1–37 lie on the Extracellular side of the membrane; sequence MPVQGSQRRLLGSLNSTPTATPHLGLAANQTGARCLE. A glycan (N-linked (GlcNAc...) asparagine) is linked at Asn29. The helical transmembrane segment at 38 to 63 threads the bilayer; it reads VSIPDGLFLSLGLVSLVENVLVVTAI. Over 64–72 the chain is Cytoplasmic; that stretch reads AKNRNLHSP. A helical membrane pass occupies residues 73 to 93; sequence MYCFICCLALSDLLVSGSNML. The Extracellular portion of the chain corresponds to 94-118; it reads ETAVILLLEAGALAARAAVVQQLDN. Residues 119–140 form a helical membrane-spanning segment; sequence VIDVITCSSMLASLCFLGAIAV. The Cytoplasmic portion of the chain corresponds to 141 to 163; that stretch reads DRYISIFYALRYHSIVTLPRARR. A helical membrane pass occupies residues 164 to 183; sequence AVAAIWVASVLFSMLFIAYY. Residues 184 to 191 are Extracellular-facing; it reads DHAAVLLC. A helical membrane pass occupies residues 192–211; sequence LVVFFLAMLVLMAVLYIHML. Over 212–240 the chain is Cytoplasmic; that stretch reads ARARQHAQGIARLHKRQCPAHQGFGLKGA. The chain crosses the membrane as a helical span at residues 241 to 266; that stretch reads ATLTILLGIFFLCWGPFFLHLTLIVL. At 267–279 the chain is on the extracellular side; sequence CPQHPTCSCIFKN. A helical transmembrane segment spans residues 280 to 300; that stretch reads FNLFLALIICNAIIDPLIYAF. The Cytoplasmic portion of the chain corresponds to 301–317; that stretch reads RSQELRRTLKEVLLCSW. Residue Cys315 is the site of S-palmitoyl cysteine attachment.

This sequence belongs to the G-protein coupled receptor 1 family. As to quaternary structure, interacts with MGRN1, but does not undergo MGRN1-mediated ubiquitination; this interaction competes with GNAS-binding and thus inhibits agonist-induced cAMP production. Interacts with OPN3; the interaction results in a decrease in MC1R-mediated cAMP signaling and ultimately a decrease in melanin production in melanocytes.

It localises to the cell membrane. Receptor for MSH (alpha, beta and gamma) and ACTH. The activity of this receptor is mediated by G proteins which activate adenylate cyclase. Mediates melanogenesis, the production of eumelanin (black/brown) and phaeomelanin (red/yellow), via regulation of cAMP signaling in melanocytes. The polypeptide is Melanocyte-stimulating hormone receptor (MC1R) (Cercopithecus mitis (Blue monkey)).